The sequence spans 207 residues: Guanylate kinase (207 aa).

In terms of domain architecture, Guanylate kinase-like spans 4–184 (GTLYIVSAPS…ALLDLKTIIR (181 aa)). Residue 11 to 18 (APSGAGKS) coordinates ATP.

Belongs to the guanylate kinase family.

Its subcellular location is the cytoplasm. The catalysed reaction is GMP + ATP = GDP + ADP. Its function is as follows. Essential for recycling GMP and indirectly, cGMP. The sequence is that of Guanylate kinase from Sodalis glossinidius (strain morsitans).